The sequence spans 665 residues: UvrABC system protein B (665 aa).

A Helicase ATP-binding domain is found at 25-412 (ASIEGGNRYQ…ENRIVEQVIR (388 aa)). 38 to 45 (GATGTGKT) lines the ATP pocket. The short motif at 91–114 (YYDYYQPEAYIPVTDTYIEKTAAI) is the Beta-hairpin element. The Helicase C-terminal domain occupies 429 to 583 (QIDDLLGEIK…VAYNKLHGIT (155 aa)). Residues 626–661 (PNLIDKLEAQMKEASKKLEFEEAAKLRDRIKQLRDK) form the UVR domain.

This sequence belongs to the UvrB family. In terms of assembly, forms a heterotetramer with UvrA during the search for lesions. Interacts with UvrC in an incision complex.

Its subcellular location is the cytoplasm. Its function is as follows. The UvrABC repair system catalyzes the recognition and processing of DNA lesions. A damage recognition complex composed of 2 UvrA and 2 UvrB subunits scans DNA for abnormalities. Upon binding of the UvrA(2)B(2) complex to a putative damaged site, the DNA wraps around one UvrB monomer. DNA wrap is dependent on ATP binding by UvrB and probably causes local melting of the DNA helix, facilitating insertion of UvrB beta-hairpin between the DNA strands. Then UvrB probes one DNA strand for the presence of a lesion. If a lesion is found the UvrA subunits dissociate and the UvrB-DNA preincision complex is formed. This complex is subsequently bound by UvrC and the second UvrB is released. If no lesion is found, the DNA wraps around the other UvrB subunit that will check the other stand for damage. The sequence is that of UvrABC system protein B from Nostoc sp. (strain PCC 7120 / SAG 25.82 / UTEX 2576).